We begin with the raw amino-acid sequence, 282 residues long: Chromatin modification-related protein YNG2 (282 aa).

Positions 35–86 (LIEEKKKYEQKESQIHKFIRQQGSIPKHPQEDGLDKEIKESLLKCQSLQREK) form a coiled coil. The disordered stretch occupies residues 123–217 (DGDMDSAAEA…KGQNGSPENE (95 aa)). Low complexity predominate over residues 129 to 143 (AAEASRESSVVSNSS). S183 carries the post-translational modification Phosphoserine. T185 is modified (phosphothreonine). At S188 the chain carries Phosphoserine. Basic and acidic residues predominate over residues 191–203 (IEKKIARTKEFKN). Residues 204-214 (SRNGKGQNGSP) are compositionally biased toward polar residues. The PHD-type zinc finger occupies 222-271 (TLYCFCQRVSFGEMVACDGPNCKYEWFHYDCVNLKEPPKGTWYCPECKIE). Residues C225, C227, C238, C243, H249, C252, C265, and C268 each coordinate Zn(2+).

This sequence belongs to the ING family. As to quaternary structure, interacts with H3K4me3 and to a lesser extent with H3K4me2. Component of the NuA4 histone acetyltransferase complex composed of at least ACT1, ARP4, YAF9, VID21, SWC4, EAF3, EAF5, EAF6, EAF7, EPL1, ESA1, TRA1 and YNG2.

The protein localises to the nucleus. In terms of biological role, component of the NuA4 histone acetyltransferase complex which is involved in transcriptional activation of selected genes principally by acetylation of nucleosomal histone H4 and H2A. The NuA4 complex is also involved in DNA repair. Involved in cell cycle progression and meiosis. This is Chromatin modification-related protein YNG2 (YNG2) from Saccharomyces cerevisiae (strain ATCC 204508 / S288c) (Baker's yeast).